The primary structure comprises 198 residues: Large ribosomal subunit protein eL18 (198 aa).

The disordered stretch occupies residues 157-198 (RHFGASGVPGSHSKPYATNRGKETKRGRRTGRSYKRKAFRHV). A compositionally biased stretch (basic residues) spans 179-198 (ETKRGRRTGRSYKRKAFRHV).

The protein belongs to the eukaryotic ribosomal protein eL18 family.

The protein resides in the cytoplasm. The polypeptide is Large ribosomal subunit protein eL18 (RPL18-A) (Leishmania major).